A 440-amino-acid polypeptide reads, in one-letter code: Golgi-associated RAB2 interactor protein 2 (440 aa).

This sequence belongs to the GARIN family. As to quaternary structure, interacts with CALM1. As to expression, expressed in testis (at protein level).

The protein localises to the cell projection. It is found in the cilium. The protein resides in the flagellum. In terms of biological role, seems to play a role in sperm motility. The polypeptide is Golgi-associated RAB2 interactor protein 2 (Mus musculus (Mouse)).